Consider the following 1113-residue polypeptide: Protein KIBRA (1113 aa).

WW domains follow at residues L6–D39 and D53–V86. Coiled-coil stretches lie at residues L107–Q193 and N293–Q431. S141 carries the post-translational modification Phosphoserine. Disordered regions lie at residues S429–S448 and R522–C547. Residues R522–T532 show a composition bias toward polar residues. Residues S533–S542 are compositionally biased toward low complexity. S535 bears the Phosphoserine mark. S542 carries the phosphoserine; by CDK1 modification. The region spanning G658–Y781 is the C2 domain. Residues L825–S975 are disordered. Residues E839–V1113 are interaction with histone H3. Positions T847–V870 are enriched in acidic residues. At S899 the chain carries Phosphoserine. T912 carries the post-translational modification Phosphothreonine. Positions I924–Y938 are enriched in polar residues. At S927 the chain carries Phosphoserine. Phosphothreonine is present on T929. S931 is subject to Phosphoserine; by CDK1. The residue at position 947 (S947) is a Phosphoserine. Interaction with PRKCZ stretches follow at residues S953–Q996 and P956–S975. S975 and S978 each carry phosphoserine; by PKC/PRKCZ. Positions W1001–Q1032 form a coiled coil. The ADDV motif motif lies at D1111–V1113.

Belongs to the WWC family. KIBRA subfamily. Homodimer. Forms heterodimers with WWC2 and WWC3. Interacts with DDN. Interacts with DYNLL1 and histone H3. The interaction with DYNLL1 is mandatory for the recruitment and transactivation functions of ESR1 or DYNLL1 to the target chromatin and the interaction with histone H3 ensures proper regulatory interaction of WWC1-DYNLL1-ESR1 complexes with target chromatin. Interacts (via WW domains) with DDR1 (via PPxY motif) in a collagen-regulated manner. Interacts with PRKCZ (via the protein kinase domain). Forms a tripartite complex with DDR1 and PRKCZ, but predominantly in the absence of collagen. Interacts (via the ADDV motif) with PATJ (via PDZ domain 8). Interacts (via WW domains) with SYNPO (via PPxY motifs). Interacts with NF2 and SNX4. Interacts with DLC1 and PRKCZ. Interacts (via WW domains) with LATS1 and LATS2. Post-translationally, phosphorylation at Ser-542 and Ser-931 by CDK1 in response to spindle damage stress regulates mitotic exit, these two sites are dephosphorylated by CDC14B. In terms of tissue distribution, expressed in mammary epithelial cells and breast cancer cell lines. Found in the luminal epithelium surrounding the ducts in the normal breast. In the brain, expressed in somatodendritic compartment of neurons in the cortex and hippocampus and in the cerebellum it is found in the Purkinje cells and some granule cells (at protein level). Detected in brain, heart, colon and kidney. In the kidney, expressed in glomerular podocytes, in some tubules and in the collecting duct.

It is found in the cytoplasm. It localises to the perinuclear region. The protein localises to the nucleus. Its subcellular location is the cell projection. The protein resides in the ruffle membrane. It is found in the cytosol. Regulator of the Hippo signaling pathway, also known as the Salvador-Warts-Hippo (SWH) pathway. Enhances phosphorylation of LATS1 and YAP1 and negatively regulates cell proliferation and organ growth due to a suppression of the transcriptional activity of YAP1, the major effector of the Hippo pathway. Along with NF2 can synergistically induce the phosphorylation of LATS1 and LATS2 and function in the regulation of Hippo signaling pathway. Acts as a transcriptional coactivator of ESR1 which plays an essential role in DYNLL1-mediated ESR1 transactivation. Regulates collagen-stimulated activation of the ERK/MAPK cascade. Modulates directional migration of podocytes. Plays a role in cognition and memory performance. Plays an important role in regulating AMPA-selective glutamate receptors (AMPARs) trafficking underlying synaptic plasticity and learning. In Homo sapiens (Human), this protein is Protein KIBRA.